The primary structure comprises 410 residues: Multifunctional CCA protein (410 aa).

Positions 8 and 11 each coordinate ATP. 2 residues coordinate CTP: glycine 8 and arginine 11. Residues aspartate 21 and aspartate 23 each contribute to the Mg(2+) site. Residues arginine 91, arginine 137, and arginine 140 each contribute to the ATP site. Arginine 91, arginine 137, and arginine 140 together coordinate CTP. Positions threonine 228 to tyrosine 329 constitute an HD domain.

Belongs to the tRNA nucleotidyltransferase/poly(A) polymerase family. Bacterial CCA-adding enzyme type 1 subfamily. In terms of assembly, monomer. Can also form homodimers and oligomers. Mg(2+) serves as cofactor. Requires Ni(2+) as cofactor.

The catalysed reaction is a tRNA precursor + 2 CTP + ATP = a tRNA with a 3' CCA end + 3 diphosphate. It carries out the reaction a tRNA with a 3' CCA end + 2 CTP + ATP = a tRNA with a 3' CCACCA end + 3 diphosphate. Catalyzes the addition and repair of the essential 3'-terminal CCA sequence in tRNAs without using a nucleic acid template. Adds these three nucleotides in the order of C, C, and A to the tRNA nucleotide-73, using CTP and ATP as substrates and producing inorganic pyrophosphate. tRNA 3'-terminal CCA addition is required both for tRNA processing and repair. Also involved in tRNA surveillance by mediating tandem CCA addition to generate a CCACCA at the 3' terminus of unstable tRNAs. While stable tRNAs receive only 3'-terminal CCA, unstable tRNAs are marked with CCACCA and rapidly degraded. The polypeptide is Multifunctional CCA protein (Pseudomonas aeruginosa (strain ATCC 15692 / DSM 22644 / CIP 104116 / JCM 14847 / LMG 12228 / 1C / PRS 101 / PAO1)).